A 98-amino-acid polypeptide reads, in one-letter code: Thrombin-like enzyme cerastotin (98 aa).

In terms of domain architecture, Peptidase S1 spans 1-98 (VIGGAECNIN…IKKPVNGSTH (98 aa)). Active-site charge relay system residues include histidine 41 and aspartate 85. Asparagine 94 is a glycosylation site (N-linked (GlcNAc...) asparagine).

The protein belongs to the peptidase S1 family. Snake venom subfamily. Monomer. As to expression, expressed by the venom gland.

It localises to the secreted. Its activity is regulated as follows. Inhibited by PMSF. Its function is as follows. Thrombin-like snake venom serine protease that preferentially cleaves the alpha-chain of fibrinogen (FGA). Induce platelet aggregation in the presence of exogenous fibrinogen. Possesses esterase and amidolytic activities. The protein is Thrombin-like enzyme cerastotin of Cerastes cerastes (Horned desert viper).